The chain runs to 246 residues: Putative KilA-N domain-containing protein L33 (246 aa).

Residues 20–129 enclose the KilA-N domain; the sequence is RYTKCQYCDI…AKVSLWIEEW (110 aa).

This Acanthamoeba polyphaga mimivirus (APMV) protein is Putative KilA-N domain-containing protein L33.